The primary structure comprises 154 residues: Large ribosomal subunit protein uL30 (154 aa).

The segment at proline 114–glycine 139 is disordered. Over residues histidine 119 to lysine 129 the composition is skewed to basic residues.

This sequence belongs to the universal ribosomal protein uL30 family. Part of the 50S ribosomal subunit.

This chain is Large ribosomal subunit protein uL30, found in Haloquadratum walsbyi (strain DSM 16790 / HBSQ001).